We begin with the raw amino-acid sequence, 61 residues long: Conotoxin Bt5.1 (61 aa).

An N-terminal signal peptide occupies residues 1–22 (MRGLPVFVILLLLIASEPSVDA). Residues 23–48 (RPKTKADVPLTSLNDNAKRTLQILRN) constitute a propeptide that is removed on maturation.

The protein belongs to the conotoxin T superfamily. In terms of processing, contains 2 disulfide bonds that can be either 'C1-C3, C2-C4' or 'C1-C4, C2-C3', since these disulfide connectivities have been observed for conotoxins with cysteine framework V (for examples, see AC P0DQQ7 and AC P81755). In terms of tissue distribution, expressed by the venom duct.

Its subcellular location is the secreted. This chain is Conotoxin Bt5.1, found in Conus betulinus (Beech cone).